The following is a 120-amino-acid chain: UPF0145 protein UNCMA_30400 (120 aa).

It belongs to the UPF0145 family.

The polypeptide is UPF0145 protein UNCMA_30400 (Methanocella arvoryzae (strain DSM 22066 / NBRC 105507 / MRE50)).